Reading from the N-terminus, the 259-residue chain is Glucosamine-6-phosphate deaminase (259 aa).

Catalysis depends on D66, which acts as the Proton acceptor; for enolization step. D135 serves as the catalytic For ring-opening step. H137 acts as the Proton acceptor; for ring-opening step in catalysis. E142 acts as the For ring-opening step in catalysis.

It belongs to the glucosamine/galactosamine-6-phosphate isomerase family. NagB subfamily.

The catalysed reaction is alpha-D-glucosamine 6-phosphate + H2O = beta-D-fructose 6-phosphate + NH4(+). It participates in amino-sugar metabolism; N-acetylneuraminate degradation; D-fructose 6-phosphate from N-acetylneuraminate: step 5/5. Catalyzes the reversible isomerization-deamination of glucosamine 6-phosphate (GlcN6P) to form fructose 6-phosphate (Fru6P) and ammonium ion. The sequence is that of Glucosamine-6-phosphate deaminase from Pseudarthrobacter chlorophenolicus (strain ATCC 700700 / DSM 12829 / CIP 107037 / JCM 12360 / KCTC 9906 / NCIMB 13794 / A6) (Arthrobacter chlorophenolicus).